The primary structure comprises 388 residues: MEIHCKHDPFAAMHRHGGVNQLGGVFVNGRPLPDVVRQRIVELAHQGVRPCDISRQLRVSHGCVSKILGRYYETGSIKPGVIGGSKPKVATPKVVDKIADYKRQNPTMFAWEIRDRLLAERVCDNDTVPSVSSINRIIRTKVQQPTNQQIPPSNHSIASTGSVTQVSSVSTDSAGSSYSISGILGITSSNAETNKRKRDEGIQESPIPNGHSLPGRDFLRKQMRGDLFTQQQLDVLDRVFERQHYTDIFTSTEPIKPEQTEYSAMASLTGGLDEMKSSLTSPSSADIGGTVPGPQSYPLVTGRDLASTTLPGYPPHVPPAGQGSYSAPTLTGMVPGSDFSGSPYSHPQYSSYNDSWRFPNPGLLGSPYYYSAARGGAPPATAAAYDRH.

Positions 15–141 (RHGGVNQLGG…SSINRIIRTK (127 aa)) form a DNA-binding region, paired. A PAI subdomain region spans residues 18-74 (GVNQLGGVFVNGRPLPDVVRQRIVELAHQGVRPCDISRQLRVSHGCVSKILGRYYET). The tract at residues 93 to 141 (KVVDKIADYKRQNPTMFAWEIRDRLLAERVCDNDTVPSVSSINRIIRTK) is RED subdomain. Over residues 143 to 158 (QQPTNQQIPPSNHSIA) the composition is skewed to polar residues. Disordered stretches follow at residues 143–162 (QQPTNQQIPPSNHSIASTGS) and 191–217 (AETNKRKRDEGIQESPIPNGHSLPGRD).

First detected in mid-neurula embryos in the folding neural tube. With the completion of neurulation, expression becomes localized to the midbrain/hindbrain boundary (MHB) till at least stage 40. Expression is absent from regions adjacent to the MHB. In tailbuds, weakly and transiently expressed in the developing otic vesicle from stage 21 to stage 27.

It is found in the nucleus. Probable transcription factor. The polypeptide is Paired box protein Pax-5 (Xenopus laevis (African clawed frog)).